A 226-amino-acid chain; its full sequence is Ribonuclease 3 (226 aa).

One can recognise an RNase III domain in the interval 7-134 (KQNLKKKYGI…FNGALFLDQG (128 aa)). Glutamate 47 is a binding site for Mg(2+). The active site involves aspartate 51. Mg(2+)-binding residues include aspartate 120 and glutamate 123. The active site involves glutamate 123. The DRBM domain occupies 160 to 226 (DYKTELQERL…AAQAALDKNK (67 aa)). The tract at residues 201 to 226 (KVSEGQGRNKKAAEQQAAQAALDKNK) is disordered. The span at 214 to 226 (EQQAAQAALDKNK) shows a compositional bias: low complexity.

This sequence belongs to the ribonuclease III family. As to quaternary structure, homodimer. The cofactor is Mg(2+).

The protein resides in the cytoplasm. It catalyses the reaction Endonucleolytic cleavage to 5'-phosphomonoester.. Digests double-stranded RNA. Involved in the processing of primary rRNA transcript to yield the immediate precursors to the large and small rRNAs (23S and 16S). Processes some mRNAs, and tRNAs when they are encoded in the rRNA operon. Processes pre-crRNA and tracrRNA of type II CRISPR loci if present in the organism. The sequence is that of Ribonuclease 3 from Lactobacillus johnsonii (strain CNCM I-12250 / La1 / NCC 533).